The primary structure comprises 387 residues: G2/mitotic-specific cyclin-B2 (387 aa).

It belongs to the cyclin family. Cyclin AB subfamily. As to quaternary structure, interacts with the CDK1 protein kinase to form a serine/threonine kinase holoenzyme complex also known as maturation promoting factor (MPF). The cyclin subunit imparts substrate specificity to the complex.

In terms of biological role, essential for the control of the cell cycle at the G2/M (mitosis) transition. The sequence is that of G2/mitotic-specific cyclin-B2 (ccnb2) from Oryzias latipes (Japanese rice fish).